The following is a 354-amino-acid chain: MFCSCLEIVFFLAGRHHSQFPSLPDENETNKSSDSPPTVFSSLPDELILNCLARVSRFYRPSLSLVNKEFQSLIASPDLEATRSRIGVTENHLYVCLESNKNNPNPRWFTLAPIPKEQKVKPIIPSFPYQHPTSSTFVSIGSEIYIIGGFVKRKRSRRVLVLDCRSHQCRRLPNMALPRVSAAADVIDGKIYVVGGSKSKNIDNWGEVFDPETQTWEPIFPTTVDLTTQKSVFPGKLVMGGKVYDMDGLKVNLNLNSCVVEIDNMMCQISVCKGILVWYDSEEDLVWNKSMVFDRLGLDWTKEGKTEIWCAEISLERRGFGELWGFVEWSKKVFTYDGCDSPSDFFLHSAIVTY.

An F-box domain is found at 37 to 86 (PTVFSSLPDELILNCLARVSRFYRPSLSLVNKEFQSLIASPDLEATRSRI). 2 Kelch repeats span residues 143 to 189 (EIYI…VIDG) and 190 to 236 (KIYV…FPGK).

The chain is Putative F-box/kelch-repeat protein At5g03000 from Arabidopsis thaliana (Mouse-ear cress).